A 103-amino-acid chain; its full sequence is Histone H4 (103 aa).

The segment covering 1–14 has biased composition (gly residues); it reads MTGRGKGGKGLGKG. Residues 1–20 form a disordered region; sequence MTGRGKGGKGLGKGGAKRHR. Position 6 is an N6-acetyl-N6-methyllysine; alternate (K6). 3 positions are modified to N6-methyllysine; alternate: K6, K9, and K13. Position 13 is an N6-acetyl-N6-methyllysine; alternate (K13). A DNA-binding region spans residues 17–21; it reads KRHRK. K92 carries the N6-glutaryllysine modification.

It belongs to the histone H4 family. The nucleosome is a histone octamer containing two molecules each of H2A, H2B, H3 and H4 assembled in one H3-H4 heterotetramer and two H2A-H2B heterodimers. The octamer wraps approximately 147 bp of DNA. Glutarylation at Lys-92 (H4K91glu) destabilizes nucleosomes by promoting dissociation of the H2A-H2B dimers from nucleosomes.

The protein resides in the nucleus. It localises to the chromosome. Its function is as follows. Core component of nucleosome. Nucleosomes wrap and compact DNA into chromatin, limiting DNA accessibility to the cellular machineries which require DNA as a template. Histones thereby play a central role in transcription regulation, DNA repair, DNA replication and chromosomal stability. DNA accessibility is regulated via a complex set of post-translational modifications of histones, also called histone code, and nucleosome remodeling. The polypeptide is Histone H4 (hH4-1) (Neurospora crassa (strain ATCC 24698 / 74-OR23-1A / CBS 708.71 / DSM 1257 / FGSC 987)).